The chain runs to 227 residues: Phosphatidylserine decarboxylase proenzyme (227 aa).

Residue Ser184 is the Schiff-base intermediate with substrate; via pyruvic acid of the active site. Ser184 is modified (pyruvic acid (Ser); by autocatalysis).

Belongs to the phosphatidylserine decarboxylase family. PSD-A subfamily. In terms of assembly, heterodimer of a large membrane-associated beta subunit and a small pyruvoyl-containing alpha subunit. Pyruvate is required as a cofactor. In terms of processing, is synthesized initially as an inactive proenzyme. Formation of the active enzyme involves a self-maturation process in which the active site pyruvoyl group is generated from an internal serine residue via an autocatalytic post-translational modification. Two non-identical subunits are generated from the proenzyme in this reaction, and the pyruvate is formed at the N-terminus of the alpha chain, which is derived from the carboxyl end of the proenzyme. The post-translation cleavage follows an unusual pathway, termed non-hydrolytic serinolysis, in which the side chain hydroxyl group of the serine supplies its oxygen atom to form the C-terminus of the beta chain, while the remainder of the serine residue undergoes an oxidative deamination to produce ammonia and the pyruvoyl prosthetic group on the alpha chain.

Its subcellular location is the cell membrane. It catalyses the reaction a 1,2-diacyl-sn-glycero-3-phospho-L-serine + H(+) = a 1,2-diacyl-sn-glycero-3-phosphoethanolamine + CO2. Its pathway is phospholipid metabolism; phosphatidylethanolamine biosynthesis; phosphatidylethanolamine from CDP-diacylglycerol: step 2/2. Its function is as follows. Catalyzes the formation of phosphatidylethanolamine (PtdEtn) from phosphatidylserine (PtdSer). The polypeptide is Phosphatidylserine decarboxylase proenzyme (Ehrlichia ruminantium (strain Gardel)).